We begin with the raw amino-acid sequence, 368 residues long: uncharacterized protein (368 aa).

This is an uncharacterized protein from Rickettsia prowazekii (strain Madrid E).